The sequence spans 501 residues: Cytochrome P450 7A1 (501 aa).

A helical transmembrane segment spans residues 4–24; that stretch reads IFWIWGICLSVCCCLWLILGL. Cys441 lines the heme pocket.

This sequence belongs to the cytochrome P450 family. Heme serves as cofactor. In terms of tissue distribution, detected in liver.

It is found in the endoplasmic reticulum membrane. It localises to the microsome membrane. The enzyme catalyses cholesterol + reduced [NADPH--hemoprotein reductase] + O2 = 7alpha-hydroxycholesterol + oxidized [NADPH--hemoprotein reductase] + H2O + H(+). It carries out the reaction 4beta-hydroxycholesterol + reduced [NADPH--hemoprotein reductase] + O2 = 4beta,7alpha-dihydroxycholesterol + oxidized [NADPH--hemoprotein reductase] + H2O + H(+). It catalyses the reaction lathosterol + reduced [NADPH--hemoprotein reductase] + O2 = 7alpha,8alpha-epoxy-5alpha-cholestan-3beta-ol + oxidized [NADPH--hemoprotein reductase] + H2O + H(+). The catalysed reaction is lathosterol + reduced [NADPH--hemoprotein reductase] + O2 = 5alpha-cholestan-7-oxo-3beta-ol + oxidized [NADPH--hemoprotein reductase] + H2O + H(+). The enzyme catalyses 7-dehydrocholesterol + reduced [NADPH--hemoprotein reductase] + O2 = 7-oxocholesterol + oxidized [NADPH--hemoprotein reductase] + H2O + H(+). It carries out the reaction (24S)-hydroxycholesterol + reduced [NADPH--hemoprotein reductase] + O2 = (24S)-7alpha-dihydroxycholesterol + oxidized [NADPH--hemoprotein reductase] + H2O + H(+). It catalyses the reaction (24R)-hydroxycholesterol + reduced [NADPH--hemoprotein reductase] + O2 = (24R)-7alpha-dihydroxycholesterol + oxidized [NADPH--hemoprotein reductase] + H2O + H(+). The protein operates within lipid metabolism; bile acid biosynthesis. Its pathway is steroid metabolism; cholesterol degradation. Functionally, a cytochrome P450 monooxygenase involved in the metabolism of endogenous cholesterol and its oxygenated derivatives (oxysterols). Mechanistically, uses molecular oxygen inserting one oxygen atom into a substrate, and reducing the second into a water molecule, with two electrons provided by NADPH via cytochrome P450 reductase (CPR; NADPH-ferrihemoprotein reductase). Functions as a critical regulatory enzyme of bile acid biosynthesis and cholesterol homeostasis. Catalyzes the hydroxylation of carbon hydrogen bond at 7-alpha position of cholesterol, a rate-limiting step in cholesterol catabolism and bile acid biosynthesis. 7-alpha hydroxylates several oxysterols, including 4beta-hydroxycholesterol and 24-hydroxycholesterol. Catalyzes the oxidation of the 7,8 double bond of 7-dehydrocholesterol and lathosterol with direct and predominant formation of the 7-keto derivatives. This Oryctolagus cuniculus (Rabbit) protein is Cytochrome P450 7A1 (CYP7A1).